A 340-amino-acid polypeptide reads, in one-letter code: Trimethylamine N-oxide transport system ATP-binding protein TmoW (340 aa).

Residues 32–268 (GRSFDDIRAD…PTTGYVAKFT (237 aa)) enclose the ABC transporter domain. Residue 64–71 (GLSGSGKS) coordinates ATP.

This sequence belongs to the ABC transporter superfamily. In terms of assembly, the complex is probably composed of two ATP-binding proteins (TmoW), two transmembrane proteins (TmoV) and a solute-binding protein (TmoX).

The protein localises to the cell inner membrane. The catalysed reaction is a quaternary ammonium(out) + ATP + H2O = a quaternary ammonium(in) + ADP + phosphate + H(+). Its function is as follows. Part of the ABC transporter complex TmoXWV involved in trimethylamine N-oxide (TMAO) import. Responsible for energy coupling to the transport system. Is specific for TMAO and essential for TMAO metabolism. In Ruegeria pomeroyi (strain ATCC 700808 / DSM 15171 / DSS-3) (Silicibacter pomeroyi), this protein is Trimethylamine N-oxide transport system ATP-binding protein TmoW.